A 262-amino-acid chain; its full sequence is tRNA pseudouridine synthase A (262 aa).

The active-site Nucleophile is aspartate 52. Tyrosine 103 lines the substrate pocket.

It belongs to the tRNA pseudouridine synthase TruA family.

The enzyme catalyses uridine(38/39/40) in tRNA = pseudouridine(38/39/40) in tRNA. Functionally, formation of pseudouridine at positions 38, 39 and 40 in the anticodon stem and loop of transfer RNAs. This Methanococcus maripaludis (strain C6 / ATCC BAA-1332) protein is tRNA pseudouridine synthase A.